A 603-amino-acid polypeptide reads, in one-letter code: Elongation factor 4 (603 aa).

The 183-residue stretch at 6–188 (SKIRNFCIIA…QIVKKIPAPT (183 aa)) folds into the tr-type G domain. Residues 18–23 (DHGKST) and 135–138 (NKVD) each bind GTP.

It belongs to the TRAFAC class translation factor GTPase superfamily. Classic translation factor GTPase family. LepA subfamily.

It is found in the cell membrane. It carries out the reaction GTP + H2O = GDP + phosphate + H(+). Required for accurate and efficient protein synthesis under certain stress conditions. May act as a fidelity factor of the translation reaction, by catalyzing a one-codon backward translocation of tRNAs on improperly translocated ribosomes. Back-translocation proceeds from a post-translocation (POST) complex to a pre-translocation (PRE) complex, thus giving elongation factor G a second chance to translocate the tRNAs correctly. Binds to ribosomes in a GTP-dependent manner. This Agathobacter rectalis (strain ATCC 33656 / DSM 3377 / JCM 17463 / KCTC 5835 / VPI 0990) (Eubacterium rectale) protein is Elongation factor 4.